A 330-amino-acid chain; its full sequence is MRVTMSLEALTTEALAAIAAAQDLVALDQVRVQFTGKKSQLAEQSKALGKMDPEERKVQGAAIHAVRETINNALTERQTALQQAALAQKLASETIDITLPGRGQRVGTVHPVTQVQERICQFFTKAGFTVATGPEVEDDYHNFEALNIPGHHPARAMHDTFYFDANHLLRTHTSGVQIRTMETSQPPIRIVCPGRVYRCDSDQTHSPMFHQIEGLYVAENTSFAELKGLLINLLNEFFEKDLKVRFRPSYFPFTEPSAEVDIMDERGRWLEVLGCGMVHPNVLRAAGIDPDKYKGFAFGLGVERFAMLRYGINDLRMFYQNDVRFLRQFA.

A Mg(2+)-binding site is contributed by glutamate 255.

It belongs to the class-II aminoacyl-tRNA synthetase family. Phe-tRNA synthetase alpha subunit type 1 subfamily. As to quaternary structure, tetramer of two alpha and two beta subunits. It depends on Mg(2+) as a cofactor.

The protein resides in the cytoplasm. It catalyses the reaction tRNA(Phe) + L-phenylalanine + ATP = L-phenylalanyl-tRNA(Phe) + AMP + diphosphate + H(+). The protein is Phenylalanine--tRNA ligase alpha subunit of Acinetobacter baumannii (strain SDF).